A 535-amino-acid chain; its full sequence is Peptide chain release factor 3 (535 aa).

The region spanning 8–277 (KRRRTFAIIS…TLVELAPPPG (270 aa)) is the tr-type G domain. GTP-binding positions include 17 to 24 (SHPDAGKT), 85 to 89 (DTPGH), and 139 to 142 (NKLD).

It belongs to the TRAFAC class translation factor GTPase superfamily. Classic translation factor GTPase family. PrfC subfamily.

The protein resides in the cytoplasm. Functionally, increases the formation of ribosomal termination complexes and stimulates activities of RF-1 and RF-2. It binds guanine nucleotides and has strong preference for UGA stop codons. It may interact directly with the ribosome. The stimulation of RF-1 and RF-2 is significantly reduced by GTP and GDP, but not by GMP. The protein is Peptide chain release factor 3 of Nitrosomonas europaea (strain ATCC 19718 / CIP 103999 / KCTC 2705 / NBRC 14298).